The primary structure comprises 165 residues: Peptidyl-prolyl cis-trans isomerase A (165 aa).

M1 is modified (N-acetylmethionine). V2 is modified (N-acetylvaline; in Peptidyl-prolyl cis-trans isomerase A, N-terminally processed). One can recognise a PPIase cyclophilin-type domain in the interval 7–163 (FFDIAVDGEP…KKITIADCGQ (157 aa)). K28 bears the N6-acetyllysine; alternate mark. K28 participates in a covalent cross-link: Glycyl lysine isopeptide (Lys-Gly) (interchain with G-Cter in SUMO2); alternate. A Glycyl lysine isopeptide (Lys-Gly) (interchain with G-Cter in ubiquitin); alternate cross-link involves residue K28. 2 positions are modified to N6-acetyllysine: K44 and K76. Residue S77 is modified to Phosphoserine. The residue at position 82 (K82) is an N6-acetyllysine; alternate. A Glycyl lysine isopeptide (Lys-Gly) (interchain with G-Cter in SUMO2); alternate cross-link involves residue K82. T93 carries the phosphothreonine modification. N108 carries an N-linked (GlcNAc...) asparagine glycan. K125, K131, and K133 each carry N6-acetyllysine.

This sequence belongs to the cyclophilin-type PPIase family. PPIase A subfamily. In terms of assembly, interacts with protein phosphatase PPP3CA/calcineurin A. Interacts with isoform 2 of BSG/CD147. Interacts with FOXO1; the interaction promotes FOXO1 dephosphorylation, nuclear accumulation and transcriptional activity. Interacts with integrin ITGA2B:ITGB3; the interaction is ROS and peptidyl-prolyl cis-trans isomerase (PPIase) activity-dependent and is increased in the presence of thrombin. Interacts with MAP3K5. Interacts with TARDBP; the interaction is dependent on the RNA-binding activity of TARDBP and the PPIase activity of PPIA/CYPA and the acetylation of PPIA/CYPA at Lys-125 favors the interaction. Interacts with HNRNPA1, HNRNPA2B1, HNRNPC, RBMX, HNRNPK and HNRNPM. Post-translationally, acetylation at Lys-125 markedly inhibits catalysis of cis to trans isomerization. PPIA acetylation also antagonizes the immunosuppressive effects of cyclosporine by inhibiting the sequential steps of cyclosporine binding and calcineurin inhibition. Acetylation at Lys-125 favors the interaction with TARDBP.

It localises to the cytoplasm. It is found in the secreted. Its subcellular location is the nucleus. It carries out the reaction [protein]-peptidylproline (omega=180) = [protein]-peptidylproline (omega=0). Binds cyclosporin A (CsA). CsA mediates some of its effects via an inhibitory action on PPIase. Functionally, catalyzes the cis-trans isomerization of proline imidic peptide bonds in oligopeptides. Exerts a strong chemotactic effect on leukocytes partly through activation of one of its membrane receptors BSG/CD147, initiating a signaling cascade that culminates in MAPK/ERK activation. Activates endothelial cells (ECs) in a proinflammatory manner by stimulating activation of NF-kappa-B and ERK, JNK and p38 MAP-kinases and by inducing expression of adhesion molecules including SELE and VCAM1. Induces apoptosis in ECs by promoting the FOXO1-dependent expression of CCL2 and BCL2L11 which are involved in EC chemotaxis and apoptosis. In response to oxidative stress, initiates proapoptotic and antiapoptotic signaling in ECs via activation of NF-kappa-B and AKT1 and up-regulation of antiapoptotic protein BCL2. Negatively regulates MAP3K5/ASK1 kinase activity, autophosphorylation and oxidative stress-induced apoptosis mediated by MAP3K5/ASK1. Necessary for the assembly of TARDBP in heterogeneous nuclear ribonucleoprotein (hnRNP) complexes and regulates TARDBP binding to RNA UG repeats and TARDBP-dependent expression of HDAC6, ATG7 and VCP which are involved in clearance of protein aggregates. Plays an important role in platelet activation and aggregation. Regulates calcium mobilization and integrin ITGA2B:ITGB3 bidirectional signaling via increased ROS production as well as by facilitating the interaction between integrin and the cell cytoskeleton. Binds heparan sulfate glycosaminoglycans. In Symphalangus syndactylus (Siamang), this protein is Peptidyl-prolyl cis-trans isomerase A (PPIA).